A 128-amino-acid polypeptide reads, in one-letter code: Holo-[acyl-carrier-protein] synthase (128 aa).

Mg(2+) contacts are provided by D8 and E58.

Belongs to the P-Pant transferase superfamily. AcpS family. It depends on Mg(2+) as a cofactor.

It localises to the cytoplasm. It catalyses the reaction apo-[ACP] + CoA = holo-[ACP] + adenosine 3',5'-bisphosphate + H(+). Transfers the 4'-phosphopantetheine moiety from coenzyme A to a Ser of acyl-carrier-protein. The polypeptide is Holo-[acyl-carrier-protein] synthase (Exiguobacterium sibiricum (strain DSM 17290 / CCUG 55495 / CIP 109462 / JCM 13490 / 255-15)).